A 189-amino-acid polypeptide reads, in one-letter code: GTP cyclohydrolase 1 (189 aa).

Cys-78, His-81, and Cys-150 together coordinate Zn(2+).

Belongs to the GTP cyclohydrolase I family. Homomer.

It catalyses the reaction GTP + H2O = 7,8-dihydroneopterin 3'-triphosphate + formate + H(+). It participates in cofactor biosynthesis; 7,8-dihydroneopterin triphosphate biosynthesis; 7,8-dihydroneopterin triphosphate from GTP: step 1/1. The protein is GTP cyclohydrolase 1 of Bacillus anthracis (strain A0248).